The primary structure comprises 303 residues: UDP-3-O-acyl-N-acetylglucosamine deacetylase (303 aa).

Zn(2+) is bound by residues histidine 78, histidine 237, and aspartate 241. The Proton donor role is filled by histidine 264.

This sequence belongs to the LpxC family. Requires Zn(2+) as cofactor.

The enzyme catalyses a UDP-3-O-[(3R)-3-hydroxyacyl]-N-acetyl-alpha-D-glucosamine + H2O = a UDP-3-O-[(3R)-3-hydroxyacyl]-alpha-D-glucosamine + acetate. Its pathway is glycolipid biosynthesis; lipid IV(A) biosynthesis; lipid IV(A) from (3R)-3-hydroxytetradecanoyl-[acyl-carrier-protein] and UDP-N-acetyl-alpha-D-glucosamine: step 2/6. Catalyzes the hydrolysis of UDP-3-O-myristoyl-N-acetylglucosamine to form UDP-3-O-myristoylglucosamine and acetate, the committed step in lipid A biosynthesis. This is UDP-3-O-acyl-N-acetylglucosamine deacetylase from Teredinibacter turnerae (strain ATCC 39867 / T7901).